The following is a 505-amino-acid chain: Peroxisome proliferator-activated receptor gamma (505 aa).

A glycan (O-linked (GlcNAc) threonine) is linked at threonine 84. Serine 112 carries the post-translational modification Phosphoserine; by MAPK. Residues alanine 136–phenylalanine 210 constitute a DNA-binding region (nuclear receptor). 2 consecutive NR C4-type zinc fingers follow at residues cysteine 139–cysteine 159 and cysteine 176–cysteine 198. An interaction with FAM120B region spans residues histidine 205–methionine 280. An NR LBD domain is found at aspartate 238–aspartate 503. Lysine 252 participates in a covalent cross-link: Glycyl lysine isopeptide (Lys-Gly) (interchain with G-Cter in ubiquitin). The 9aaTAD motif lies at proline 495–aspartate 503.

Belongs to the nuclear hormone receptor family. NR1 subfamily. In terms of assembly, heterodimer with other nuclear receptors, such as RXRA. The heterodimer with the retinoic acid receptor RXRA is called adipocyte-specific transcription factor ARF6. Interacts with NCOA6 coactivator, leading to a strong increase in transcription of target genes. Interacts with coactivator PPARBP, leading to a mild increase in transcription of target genes. Interacts with NOCA7 in a ligand-inducible manner. Interacts with NCOA1 and NCOA2 LXXLL motifs. Interacts with ASXL1, ASXL2, DNTTIP2, FAM120B, MAP2K1/MEK1, NR0B2, PDPK1, PRDM16, PRMT2 and TGFB1I1. Interacts (when activated by agonist) with PPP5C. Interacts with HELZ2 and THRAP3; the interaction stimulates the transcriptional activity of PPARG. Interacts with PER2, the interaction is ligand dependent and blocks PPARG recruitment to target promoters. Interacts with NOCT. Interacts with FOXO1 (acetylated form). Interacts with ACTN4. Interacts (when in the liganded conformation) with GPS2. Interacts with CRY1 and CRY2 in a ligand-dependent manner. In the absence of hormonal ligand, interacts with TACC1. In macrophages, interacts with PAQR3 and STUB1; the interactions promote PPARG poylubiquitination and STUB1-mediated degradation. In terms of processing, O-GlcNAcylation at Thr-84 reduces transcriptional activity in adipocytes. Phosphorylated in basal conditions and dephosphorylated when treated with the ligand. May be dephosphorylated by PPP5C. The phosphorylated Ser-112 form is recognized by PER2 and repressed, dephosphorylation at Ser-112 induces adipogenic activity. Ser-112 phosphorylation levels are reduced by 65% in brown adipose tissue compared to white adipose tissue. Post-translationally, ubiquitinated by E3 ubiquitin-protein ligase complex containing FBXO9; leading to proteasomal degradation. In terms of processing, ubiquitinated by E3 ubiquitin-protein ligase complex containing FBXO9; leading to proteasomal degradation. Ubiquitinated at Lys-252 by TRIM55 leading to proteasomal degradation. Ubiquitinated by E3 ubiquitin-protein ligase STUB1/CHIP; leading to proteasomal degradation. As to expression, highest expression in white and brown adipose tissue. Also found in liver, skeletal muscle, heart, adrenal gland, spleen, kidney and intestine. Isoform 2 is more abundant than isoform 1 in adipose tissue.

The protein localises to the nucleus. It localises to the cytoplasm. Its activity is regulated as follows. PDPK1 activates its transcriptional activity independently of its kinase activity. Functionally, nuclear receptor that binds peroxisome proliferators such as hypolipidemic drugs and fatty acids. Once activated by a ligand, the nuclear receptor binds to DNA specific PPAR response elements (PPRE) and modulates the transcription of its target genes, such as acyl-CoA oxidase. It therefore controls the peroxisomal beta-oxidation pathway of fatty acids. Key regulator of adipocyte differentiation and glucose homeostasis. ARF6 acts as a key regulator of the tissue-specific adipocyte P2 (aP2) enhancer. Acts as a critical regulator of gut homeostasis by suppressing NF-kappa-B-mediated pro-inflammatory responses. Plays a role in the regulation of cardiovascular circadian rhythms by regulating the transcription of BMAL1 in the blood vessels. The sequence is that of Peroxisome proliferator-activated receptor gamma (Pparg) from Mus musculus (Mouse).